Consider the following 499-residue polypeptide: Glutamyl-tRNA(Gln) amidotransferase subunit A (499 aa).

Catalysis depends on charge relay system residues K80 and S155. Catalysis depends on S179, which acts as the Acyl-ester intermediate.

The protein belongs to the amidase family. GatA subfamily. Heterotrimer of A, B and C subunits.

It carries out the reaction L-glutamyl-tRNA(Gln) + L-glutamine + ATP + H2O = L-glutaminyl-tRNA(Gln) + L-glutamate + ADP + phosphate + H(+). In terms of biological role, allows the formation of correctly charged Gln-tRNA(Gln) through the transamidation of misacylated Glu-tRNA(Gln) in organisms which lack glutaminyl-tRNA synthetase. The reaction takes place in the presence of glutamine and ATP through an activated gamma-phospho-Glu-tRNA(Gln). The protein is Glutamyl-tRNA(Gln) amidotransferase subunit A of Cupriavidus metallidurans (strain ATCC 43123 / DSM 2839 / NBRC 102507 / CH34) (Ralstonia metallidurans).